The chain runs to 336 residues: L-Ala-D/L-amino acid epimerase (336 aa).

Substrate contacts are provided by residues threonine 130 and lysine 152–lysine 154. Mg(2+) contacts are provided by aspartate 178, glutamate 204, and aspartate 229. Residues lysine 251 and aspartate 301–aspartate 303 each bind substrate.

Belongs to the mandelate racemase/muconate lactonizing enzyme family. Requires Mg(2+) as cofactor.

Functionally, catalyzes the epimerization of D-Ala-D-Ala to D-Ala-L-Ala. Has broad substrate specificity and catalyzes the epimerization of a variety of dipeptides containing an N-terminal Ala followed by Ser, Thr, Val, Met, His, Phe or Trp (in vitro). The chain is L-Ala-D/L-amino acid epimerase from Flavobacterium johnsoniae (strain ATCC 17061 / DSM 2064 / JCM 8514 / BCRC 14874 / CCUG 350202 / NBRC 14942 / NCIMB 11054 / UW101) (Cytophaga johnsonae).